The chain runs to 546 residues: Membrane protein insertase YidC (546 aa).

A helical transmembrane segment spans residues 8–28 (ILLATVLSVGILILWQVIFPT). Positions 31 to 70 (APPKPAHPPAAEVAKPAAPASPAPGAAAPAVPAPPPDAPE) are disordered. Low complexity predominate over residues 39–60 (PAAEVAKPAAPASPAPGAAAPA). The next 5 membrane-spanning stretches (helical) occupy residues 326–346 (IDYG…LYVM), 356–376 (WGVA…PLTY), 422–442 (LGGC…YAAL), 459–479 (LTAH…SFVM), and 498–518 (FFPG…TLYI).

The protein belongs to the OXA1/ALB3/YidC family. Type 1 subfamily. In terms of assembly, interacts with the Sec translocase complex via SecD. Specifically interacts with transmembrane segments of nascent integral membrane proteins during membrane integration.

The protein localises to the cell inner membrane. Required for the insertion and/or proper folding and/or complex formation of integral membrane proteins into the membrane. Involved in integration of membrane proteins that insert both dependently and independently of the Sec translocase complex, as well as at least some lipoproteins. Aids folding of multispanning membrane proteins. This Anaeromyxobacter dehalogenans (strain 2CP-1 / ATCC BAA-258) protein is Membrane protein insertase YidC.